A 101-amino-acid polypeptide reads, in one-letter code: Urease subunit beta (101 aa).

Belongs to the urease beta subunit family. In terms of assembly, heterotrimer of UreA (gamma), UreB (beta) and UreC (alpha) subunits. Three heterotrimers associate to form the active enzyme.

The protein localises to the cytoplasm. It catalyses the reaction urea + 2 H2O + H(+) = hydrogencarbonate + 2 NH4(+). Its pathway is nitrogen metabolism; urea degradation; CO(2) and NH(3) from urea (urease route): step 1/1. The protein is Urease subunit beta of Thermosynechococcus vestitus (strain NIES-2133 / IAM M-273 / BP-1).